A 482-amino-acid chain; its full sequence is Scarecrow-like protein 3 (482 aa).

The GRAS domain maps to 45–479 (LKPEERGLYL…RPLYSVSAWR (435 aa)). The interval 52-115 (LYLIHLLLTC…ILKSWPGLYK (64 aa)) is leucine repeat I (LRI). The segment at 134–199 (RRLFFEMFPI…EGPPHLRITG (66 aa)) is VHIID. The VHIID motif lies at 165 to 169 (VHVID). The interval 209-241 (QMAHRLIEEAEKLDIPFQFNPVVSRLDCLNVEQ) is leucine repeat II (LRII). The interval 250-401 (LAVSSVLQLH…KMLFGEEIKN (152 aa)) is PFYRE. A disordered region spans residues 302–324 (ENDMSNNNGYSPSGDSASSLPLP). The span at 305–324 (MSNNNGYSPSGDSASSLPLP) shows a compositional bias: polar residues. The SAW stretch occupies residues 404-479 (SCEGFERRER…RPLYSVSAWR (76 aa)).

It belongs to the GRAS family. As to quaternary structure, binds to zinc finger proteins MGP/IDD3, IDD4, IDD5, BIB/IDD9 and JKD/IDD10. In terms of tissue distribution, expressed in seedlings, root epidermis, leaves, flowers and siliques.

It localises to the nucleus. Functionally, probable transcription factor involved in plant development. The polypeptide is Scarecrow-like protein 3 (Arabidopsis thaliana (Mouse-ear cress)).